Reading from the N-terminus, the 63-residue chain is DNA gyrase inhibitor YacG (63 aa).

Residues C9, C12, C28, and C32 each contribute to the Zn(2+) site.

The protein belongs to the DNA gyrase inhibitor YacG family. In terms of assembly, interacts with GyrB. It depends on Zn(2+) as a cofactor.

Functionally, inhibits all the catalytic activities of DNA gyrase by preventing its interaction with DNA. Acts by binding directly to the C-terminal domain of GyrB, which probably disrupts DNA binding by the gyrase. The chain is DNA gyrase inhibitor YacG from Salmonella choleraesuis (strain SC-B67).